A 1014-amino-acid chain; its full sequence is RNA-directed RNA polymerase (1014 aa).

The 123-residue stretch at 618 to 740 folds into the RdRp catalytic domain; it reads HELEEGDYTC…ANHQGEFHSY (123 aa). The tract at residues 918-1014 is disordered; it reads KEEDERQPET…TLVFKNSSLS (97 aa). The span at 956–967 shows a compositional bias: basic residues; the sequence is KGKRKVKGRRPR.

This sequence belongs to the nodaviridae RNA polymerase family.

It catalyses the reaction RNA(n) + a ribonucleoside 5'-triphosphate = RNA(n+1) + diphosphate. In terms of biological role, RNA-dependent RNA polymerase which replicates the viral genome composed of 2 RNA segments, RNA1 and RNA2. The polypeptide is RNA-directed RNA polymerase (Pieris rapae (Small white butterfly)).